A 513-amino-acid polypeptide reads, in one-letter code: GMP synthase [glutamine-hydrolyzing] (513 aa).

The 191-residue stretch at 5-195 (LVLVIDFGGQ…VYNICGCTGD (191 aa)) folds into the Glutamine amidotransferase type-1 domain. The active-site Nucleophile is C82. Residues H169 and E171 contribute to the active site. In terms of domain architecture, GMPS ATP-PPase spans 196 to 388 (WKMDSFVEKT…LGIPEKLVFR (193 aa)). 223-229 (SGGVDSS) provides a ligand contact to ATP.

As to quaternary structure, homodimer.

It carries out the reaction XMP + L-glutamine + ATP + H2O = GMP + L-glutamate + AMP + diphosphate + 2 H(+). It participates in purine metabolism; GMP biosynthesis; GMP from XMP (L-Gln route): step 1/1. Catalyzes the synthesis of GMP from XMP. This chain is GMP synthase [glutamine-hydrolyzing], found in Clostridium botulinum (strain Alaska E43 / Type E3).